Consider the following 218-residue polypeptide: Response regulator UvrY (218 aa).

Residues 3 to 119 form the Response regulatory domain; that stretch reads NVLLVDDHEL…EVVSAIRSVY (117 aa). D54 carries the post-translational modification 4-aspartylphosphate. The 66-residue stretch at 143-208 folds into the HTH luxR-type domain; the sequence is TESPFASLSE…ELTHLAIRHG (66 aa). The segment at residues 167–186 is a DNA-binding region (H-T-H motif); the sequence is VNEISEQLNLSPKTVNSYRY.

Phosphorylated and activated by BarA.

The protein localises to the cytoplasm. In terms of biological role, member of the two-component regulatory system UvrY/BarA involved in the regulation of carbon metabolism via the CsrA/CsrB regulatory system. UvrY activates the transcription of the untranslated csrB RNA and of barA, in an autoregulatory loop. Mediates the effects of CsrA on csrB RNA by BarA-dependent and BarA-independent mechanisms. The polypeptide is Response regulator UvrY (uvrY) (Escherichia coli (strain K12)).